The chain runs to 600 residues: Probable translation initiation factor IF-2 (600 aa).

Residues 10 to 227 (LRQPIVVVLG…LLAGLTQRYL (218 aa)) form the tr-type G domain. A G1 region spans residues 19–26 (GHVDHGKT). Position 19-26 (19-26 (GHVDHGKT)) interacts with GTP. The tract at residues 44-48 (EMTQE) is G2. Residues 83 to 86 (DTPG) are G3. GTP contacts are provided by residues 83–87 (DTPGH) and 137–140 (NKID). The interval 137-140 (NKID) is G4. The interval 205–207 (SAK) is G5.

It belongs to the TRAFAC class translation factor GTPase superfamily. Classic translation factor GTPase family. IF-2 subfamily.

In terms of biological role, function in general translation initiation by promoting the binding of the formylmethionine-tRNA to ribosomes. Seems to function along with eIF-2. In Saccharolobus solfataricus (strain ATCC 35092 / DSM 1617 / JCM 11322 / P2) (Sulfolobus solfataricus), this protein is Probable translation initiation factor IF-2.